The following is a 153-amino-acid chain: Small ribosomal subunit protein bS16 (153 aa).

Residues 130-153 form a disordered region; sequence EAEAAAAAEEAPAEEAAEEAPAEA. The span at 140-153 shows a compositional bias: acidic residues; it reads APAEEAAEEAPAEA.

It belongs to the bacterial ribosomal protein bS16 family.

The chain is Small ribosomal subunit protein bS16 from Bifidobacterium longum subsp. infantis (strain ATCC 15697 / DSM 20088 / JCM 1222 / NCTC 11817 / S12).